The following is an 87-amino-acid chain: Putative septation protein SpoVG (87 aa).

It belongs to the SpoVG family.

Its function is as follows. Could be involved in septation. The sequence is that of Putative septation protein SpoVG from Agathobacter rectalis (strain ATCC 33656 / DSM 3377 / JCM 17463 / KCTC 5835 / VPI 0990) (Eubacterium rectale).